The sequence spans 461 residues: ATP synthase subunit beta (461 aa).

Residue 149–156 (GGAGVGKT) participates in ATP binding.

This sequence belongs to the ATPase alpha/beta chains family. F-type ATPases have 2 components, CF(1) - the catalytic core - and CF(0) - the membrane proton channel. CF(1) has five subunits: alpha(3), beta(3), gamma(1), delta(1), epsilon(1). CF(0) has three main subunits: a(1), b(2) and c(9-12). The alpha and beta chains form an alternating ring which encloses part of the gamma chain. CF(1) is attached to CF(0) by a central stalk formed by the gamma and epsilon chains, while a peripheral stalk is formed by the delta and b chains.

The protein resides in the cell membrane. The enzyme catalyses ATP + H2O + 4 H(+)(in) = ADP + phosphate + 5 H(+)(out). Its function is as follows. Produces ATP from ADP in the presence of a proton gradient across the membrane. The catalytic sites are hosted primarily by the beta subunits. This is ATP synthase subunit beta from Caldanaerobacter subterraneus subsp. tengcongensis (strain DSM 15242 / JCM 11007 / NBRC 100824 / MB4) (Thermoanaerobacter tengcongensis).